The chain runs to 430 residues: 3-phosphoshikimate 1-carboxyvinyltransferase (430 aa).

Residues lysine 20, serine 21, and arginine 25 each coordinate 3-phosphoshikimate. Residue lysine 20 participates in phosphoenolpyruvate binding. 2 residues coordinate phosphoenolpyruvate: glycine 90 and arginine 118. Serine 163, serine 164, glutamine 165, serine 191, aspartate 311, and lysine 338 together coordinate 3-phosphoshikimate. Glutamine 165 contacts phosphoenolpyruvate. Aspartate 311 (proton acceptor) is an active-site residue. 2 residues coordinate phosphoenolpyruvate: arginine 342 and arginine 383.

This sequence belongs to the EPSP synthase family. As to quaternary structure, monomer.

It localises to the cytoplasm. It carries out the reaction 3-phosphoshikimate + phosphoenolpyruvate = 5-O-(1-carboxyvinyl)-3-phosphoshikimate + phosphate. It participates in metabolic intermediate biosynthesis; chorismate biosynthesis. Catalyzes the transfer of the enolpyruvyl moiety of phosphoenolpyruvate (PEP) to the 5-hydroxyl of shikimate-3-phosphate (S3P) to produce enolpyruvyl shikimate-3-phosphate and inorganic phosphate. The sequence is that of 3-phosphoshikimate 1-carboxyvinyltransferase from Methanosarcina mazei (strain ATCC BAA-159 / DSM 3647 / Goe1 / Go1 / JCM 11833 / OCM 88) (Methanosarcina frisia).